A 303-amino-acid polypeptide reads, in one-letter code: UDP-3-O-acyl-N-acetylglucosamine deacetylase (303 aa).

H78, H237, and D241 together coordinate Zn(2+). The Proton donor role is filled by H264.

Belongs to the LpxC family. The cofactor is Zn(2+).

The enzyme catalyses a UDP-3-O-[(3R)-3-hydroxyacyl]-N-acetyl-alpha-D-glucosamine + H2O = a UDP-3-O-[(3R)-3-hydroxyacyl]-alpha-D-glucosamine + acetate. It participates in glycolipid biosynthesis; lipid IV(A) biosynthesis; lipid IV(A) from (3R)-3-hydroxytetradecanoyl-[acyl-carrier-protein] and UDP-N-acetyl-alpha-D-glucosamine: step 2/6. Its function is as follows. Catalyzes the hydrolysis of UDP-3-O-myristoyl-N-acetylglucosamine to form UDP-3-O-myristoylglucosamine and acetate, the committed step in lipid A biosynthesis. This chain is UDP-3-O-acyl-N-acetylglucosamine deacetylase, found in Pseudomonas syringae pv. tomato (strain ATCC BAA-871 / DC3000).